The chain runs to 408 residues: Phosphoglycerate kinase (408 aa).

Substrate contacts are provided by residues 24–26 (DLN), R39, 62–65 (HLGR), R121, and R161. Residues K211, G307, E338, and 364 to 367 (GGDS) each bind ATP.

The protein belongs to the phosphoglycerate kinase family. Monomer.

Its subcellular location is the cytoplasm. The enzyme catalyses (2R)-3-phosphoglycerate + ATP = (2R)-3-phospho-glyceroyl phosphate + ADP. It functions in the pathway carbohydrate degradation; glycolysis; pyruvate from D-glyceraldehyde 3-phosphate: step 2/5. This chain is Phosphoglycerate kinase, found in Arthrobacter sp. (strain FB24).